A 755-amino-acid chain; its full sequence is Proprotein convertase subtilisin/kexin type 4 (755 aa).

Residues 1 to 25 (MRPAPIALWLRLVLALALVRPRAVG) form the signal peptide. Residues 26 to 113 (WAPVRAPIYV…QQTLQRRVKR (88 aa)) constitute a propeptide that is removed on maturation. The 315-residue stretch at 126 to 440 (QWYMNSEAQP…YGLLDAGLLV (315 aa)) folds into the Peptidase S8 domain. Residues aspartate 158, histidine 199, and serine 373 each act as charge relay system in the active site. The region spanning 449–581 (TQPQRKCAVR…TLLLYGTAED (133 aa)) is the P/Homo B domain. Residues asparagine 475 and asparagine 629 are each glycosylated (N-linked (GlcNAc...) asparagine). Residues 709 to 729 (AMVLSLLAVTLGGPVLCGMSM) form a helical membrane-spanning segment.

The protein belongs to the peptidase S8 family. Furin subfamily. As to quaternary structure, the proPCSK4 form interacts with HSPA5; the interaction takes place at the endoplasmic reticulum. N-glycosylated. Post-translationally, synthesized in the endoplasmic reticulum as a zymogen, is matured by autocatalytic cleavage between the prodomain and the catalytic domain. As to expression, placenta.

It localises to the membrane. It is found in the cytoplasmic vesicle. Its subcellular location is the secretory vesicle. The protein localises to the acrosome membrane. Functionally, proprotein convertase involved in the processing of hormone and other protein precursors at sites comprised of pairs of basic amino acid residues. In males, important for ADAM2 processing as well as other acrosomal proteins with roles in fertilization and critical for normal fertilization events such as sperm capacitation, acrosome reaction and binding of sperm to zona pellucida. Also plays a role in female fertility, involved in the regulation of trophoblast migration and placental development, may be through the proteolytical processing and activation of proteins such as IGF2. May also participate in folliculogenesis in the ovaries. This chain is Proprotein convertase subtilisin/kexin type 4, found in Homo sapiens (Human).